The chain runs to 227 residues: Uracil-DNA glycosylase (227 aa).

The active-site Proton acceptor is the aspartate 68.

This sequence belongs to the uracil-DNA glycosylase (UDG) superfamily. UNG family.

The protein resides in the cytoplasm. The catalysed reaction is Hydrolyzes single-stranded DNA or mismatched double-stranded DNA and polynucleotides, releasing free uracil.. Excises uracil residues from the DNA which can arise as a result of misincorporation of dUMP residues by DNA polymerase or due to deamination of cytosine. The sequence is that of Uracil-DNA glycosylase from Mycolicibacterium paratuberculosis (strain ATCC BAA-968 / K-10) (Mycobacterium paratuberculosis).